A 341-amino-acid polypeptide reads, in one-letter code: Protein-glutamate methylesterase/protein-glutamine glutaminase 2 (341 aa).

Positions 11–126 (RVLVADDSEL…DLGEYGRLIR (116 aa)) constitute a Response regulatory domain. A 4-aspartylphosphate modification is found at Asp62. In terms of domain architecture, CheB-type methylesterase spans 152–341 (PARAARVEVV…IPRALRELTR (190 aa)). Active-site residues include Ser166, His193, and Asp285.

The protein belongs to the CheB family. Phosphorylated by CheA. Phosphorylation of the N-terminal regulatory domain activates the methylesterase activity.

It localises to the cytoplasm. It carries out the reaction [protein]-L-glutamate 5-O-methyl ester + H2O = L-glutamyl-[protein] + methanol + H(+). The catalysed reaction is L-glutaminyl-[protein] + H2O = L-glutamyl-[protein] + NH4(+). Functionally, involved in chemotaxis. Part of a chemotaxis signal transduction system that modulates chemotaxis in response to various stimuli. Catalyzes the demethylation of specific methylglutamate residues introduced into the chemoreceptors (methyl-accepting chemotaxis proteins or MCP) by CheR. Also mediates the irreversible deamidation of specific glutamine residues to glutamic acid. This is Protein-glutamate methylesterase/protein-glutamine glutaminase 2 from Anaeromyxobacter dehalogenans (strain 2CP-C).